Here is a 527-residue protein sequence, read N- to C-terminus: Sulfate adenylyltransferase (527 aa).

An N-terminal region spans residues 1-176 (MPIPTPHGGK…LQGINYPKHY (176 aa)). A catalytic region spans residues 177–406 (DYVDARKTPT…LRETNPPRSK (230 aa)). Sulfate is bound at residue Gln206. Residues 206–209 (QTRN) and 302–305 (GRDH) contribute to the ATP site. Active-site residues include Thr207, Arg208, and Asn209. Arg208 contacts sulfate. Ala306 serves as a coordination point for sulfate. Residue Val344 participates in ATP binding. The segment at 407–527 (QGFAILIDNS…VNYLKDQGFY (121 aa)) is required for oligomerization; adenylyl-sulfate kinase-like.

It belongs to the sulfate adenylyltransferase family. Homohexamer. Dimer of trimers.

The protein localises to the cytoplasm. The enzyme catalyses sulfate + ATP + H(+) = adenosine 5'-phosphosulfate + diphosphate. Its pathway is sulfur metabolism; hydrogen sulfide biosynthesis; sulfite from sulfate: step 1/3. Catalyzes the first intracellular reaction of sulfate assimilation, forming adenosine-5'-phosphosulfate (APS) from inorganic sulfate and ATP. Plays an important role in sulfate activation as a component of the biosynthesis pathway of sulfur-containing amino acids. The sequence is that of Sulfate adenylyltransferase from Candida albicans (strain SC5314 / ATCC MYA-2876) (Yeast).